A 151-amino-acid chain; its full sequence is Ubiquitin-conjugating enzyme E2 W (151 aa).

A Peptide (Met-Gly) (interchain with G-Cter in ubiquitin) cross-link involves residue methionine 1. A UBC core domain is found at 3 to 151; that stretch reads SMQKRLQKEL…TKWWYHDDTC (149 aa). The Glycyl thioester intermediate role is filled by cysteine 91.

The protein belongs to the ubiquitin-conjugating enzyme family. As to quaternary structure, homodimer. Interacts with FANCL. Interacts with STUB1/CHIP. Autoubiquitinated at Met-1.

It is found in the nucleus. It catalyses the reaction S-ubiquitinyl-[E1 ubiquitin-activating enzyme]-L-cysteine + [E2 ubiquitin-conjugating enzyme]-L-cysteine = [E1 ubiquitin-activating enzyme]-L-cysteine + S-ubiquitinyl-[E2 ubiquitin-conjugating enzyme]-L-cysteine.. The catalysed reaction is S-ubiquitinyl-[E1 ubiquitin-activating enzyme]-L-cysteine + [acceptor protein]-N-terminal-amino acid = [E1 ubiquitin-activating enzyme]-L-cysteine + N-terminal-ubiquitinyl-[acceptor protein].. It participates in protein modification; protein ubiquitination. In terms of biological role, accepts ubiquitin from the E1 complex and catalyzes its covalent attachment to other proteins. Specifically monoubiquitinates the N-terminus of various substrates, including ATXN3, MAPT/TAU, POLR2H/RPB8 and STUB1/CHIP, by recognizing backbone atoms of disordered N-termini. Involved in degradation of misfolded chaperone substrates by mediating monoubiquitination of STUB1/CHIP, leading to recruitment of ATXN3 to monoubiquitinated STUB1/CHIP, and restriction of the length of ubiquitin chain attached to STUB1/CHIP substrates by ATXN3. After UV irradiation, but not after mitomycin-C (MMC) treatment, acts as a specific E2 ubiquitin-conjugating enzyme for the Fanconi anemia complex by associating with E3 ubiquitin-protein ligase FANCL and catalyzing monoubiquitination of FANCD2, a key step in the DNA damage pathway. In vitro catalyzes 'Lys-11'-linked polyubiquitination. UBE2W-catalyzed ubiquitination also occurs in the presence of inactive RING/U-box type E3s, i.e. lacking the active site cysteine residues to form thioester bonds with ubiquitin, or even in the absence of E3, albeit at a slower rate. The protein is Ubiquitin-conjugating enzyme E2 W (Ube2w) of Mus musculus (Mouse).